The chain runs to 367 residues: 3-dehydroquinate synthase (367 aa).

NAD(+) is bound by residues 69-74, 103-107, 127-128, lysine 140, and lysine 149; these read DGEAFK, GVIGD, and TT. Zn(2+)-binding residues include glutamate 182, histidine 245, and histidine 262.

It belongs to the sugar phosphate cyclases superfamily. Dehydroquinate synthase family. Requires Co(2+) as cofactor. Zn(2+) serves as cofactor. It depends on NAD(+) as a cofactor.

It localises to the cytoplasm. It carries out the reaction 7-phospho-2-dehydro-3-deoxy-D-arabino-heptonate = 3-dehydroquinate + phosphate. It participates in metabolic intermediate biosynthesis; chorismate biosynthesis; chorismate from D-erythrose 4-phosphate and phosphoenolpyruvate: step 2/7. Functionally, catalyzes the conversion of 3-deoxy-D-arabino-heptulosonate 7-phosphate (DAHP) to dehydroquinate (DHQ). This chain is 3-dehydroquinate synthase, found in Ectopseudomonas mendocina (strain ymp) (Pseudomonas mendocina).